A 115-amino-acid polypeptide reads, in one-letter code: uncharacterized protein (115 aa).

A signal peptide spans 1–24 (MLPLCLTFLSFFLSLGGSFKAVMT). 2 helical membrane passes run 39 to 59 (FWIF…ALAI) and 93 to 113 (YLTS…FLLS).

It localises to the membrane. This is an uncharacterized protein from Saccharomyces cerevisiae (strain ATCC 204508 / S288c) (Baker's yeast).